Reading from the N-terminus, the 166-residue chain is NAD(P)H-quinone oxidoreductase subunit I, chloroplastic (166 aa).

4Fe-4S ferredoxin-type domains lie at 55 to 84 (GRIH…VDWK) and 95 to 124 (LNYS…MTEE). The [4Fe-4S] cluster site is built by Cys-64, Cys-67, Cys-70, Cys-74, Cys-104, Cys-107, Cys-110, and Cys-114.

The protein belongs to the complex I 23 kDa subunit family. As to quaternary structure, NDH is composed of at least 16 different subunits, 5 of which are encoded in the nucleus. [4Fe-4S] cluster serves as cofactor.

It localises to the plastid. It is found in the chloroplast thylakoid membrane. It carries out the reaction a plastoquinone + NADH + (n+1) H(+)(in) = a plastoquinol + NAD(+) + n H(+)(out). The catalysed reaction is a plastoquinone + NADPH + (n+1) H(+)(in) = a plastoquinol + NADP(+) + n H(+)(out). Functionally, NDH shuttles electrons from NAD(P)H:plastoquinone, via FMN and iron-sulfur (Fe-S) centers, to quinones in the photosynthetic chain and possibly in a chloroplast respiratory chain. The immediate electron acceptor for the enzyme in this species is believed to be plastoquinone. Couples the redox reaction to proton translocation, and thus conserves the redox energy in a proton gradient. The sequence is that of NAD(P)H-quinone oxidoreductase subunit I, chloroplastic from Raillardella argentea (Silky raillardella).